A 57-amino-acid polypeptide reads, in one-letter code: MIKWAIIFAIIGLIAGALGFGGMAGAAMGIAKFLFWAGIIIAIVLFVLGMTIAKKVT.

2 helical membrane passes run 4 to 24 (WAII…GGMA) and 33 to 53 (FLFW…MTIA).

Belongs to the UPF0391 family.

The protein resides in the cell membrane. This is UPF0391 membrane protein XC_2938 from Xanthomonas campestris pv. campestris (strain 8004).